Reading from the N-terminus, the 224-residue chain is Glutathione S-transferase Mu 5 (224 aa).

A GST N-terminal domain is found at 4–91; that stretch reads KSMVLGYWDI…YIARKHNMCG (88 aa). A Phosphoserine modification is found at Ser5. Glutathione contacts are provided by residues 10 to 11, 49 to 53, 62 to 63, and 75 to 76; these read YW, WLDVK, NL, and QS. Residues 93-211 form the GST C-terminal domain; it reads TEEEKIRVDI…QSDRFFKMPI (119 aa). Tyr119 lines the substrate pocket.

This sequence belongs to the GST superfamily. Mu family. As to quaternary structure, homodimer. Interacts with PFKM isoform 2 and isoform 3 (via N-terminal testis-specific region).

It localises to the cytoplasm. It carries out the reaction RX + glutathione = an S-substituted glutathione + a halide anion + H(+). Conjugation of reduced glutathione to a wide number of exogenous and endogenous hydrophobic electrophiles. This chain is Glutathione S-transferase Mu 5 (Gstm5), found in Mus musculus (Mouse).